Consider the following 159-residue polypeptide: Transcription elongation factor GreA (159 aa).

The protein belongs to the GreA/GreB family.

In terms of biological role, necessary for efficient RNA polymerase transcription elongation past template-encoded arresting sites. The arresting sites in DNA have the property of trapping a certain fraction of elongating RNA polymerases that pass through, resulting in locked ternary complexes. Cleavage of the nascent transcript by cleavage factors such as GreA or GreB allows the resumption of elongation from the new 3'terminus. GreA releases sequences of 2 to 3 nucleotides. This chain is Transcription elongation factor GreA, found in Mycoplasmoides gallisepticum (strain R(low / passage 15 / clone 2)) (Mycoplasma gallisepticum).